We begin with the raw amino-acid sequence, 457 residues long: Protein trichome birefringence-like 4 (457 aa).

Residues 19–37 traverse the membrane as a helical; Signal-anchor for type II membrane protein segment; the sequence is IFLTSLFFLSLFLLSSSSL. The GDS motif signature appears at 173–175; that stretch reads GDS. Residues 420–434 carry the DCXHWCLPGXXDXWN motif motif; that stretch reads DCSHWCLPGVPDSWN.

Belongs to the PC-esterase family. TBL subfamily.

It localises to the membrane. May act as a bridging protein that binds pectin and other cell wall polysaccharides. Probably involved in maintaining esterification of pectins. May be involved in the specific O-acetylation of cell wall polymers. This chain is Protein trichome birefringence-like 4 (TBL4), found in Arabidopsis thaliana (Mouse-ear cress).